The chain runs to 142 residues: Sorting nexin-3 (142 aa).

The PX domain maps to 21 to 138 (NFLEIEVRNP…ASFIQDPNWD (118 aa)). Residues arginine 64, serine 66, lysine 90, arginine 95, and arginine 104 each contribute to the a 1,2-diacyl-sn-glycero-3-phospho-(1D-myo-inositol-3-phosphate) site.

Belongs to the sorting nexin family.

Its subcellular location is the cytoplasm. The protein resides in the golgi apparatus membrane. It is found in the prevacuolar compartment membrane. Functionally, required for retention of late Golgi membrane proteins. Component of the retrieval machinery that functions by direct interaction with the cytosolic tails of certain TGN membrane proteins during the sorting/budding process at the prevacuolar compartment. Binds phosphatidylinositol 3-phosphate (PtdIns(P3)). The chain is Sorting nexin-3 (snx3) from Aspergillus fumigatus (strain ATCC MYA-4609 / CBS 101355 / FGSC A1100 / Af293) (Neosartorya fumigata).